The primary structure comprises 198 residues: Endonuclease V (198 aa).

2 residues coordinate Mg(2+): D38 and D101.

Belongs to the endonuclease V family. Requires Mg(2+) as cofactor.

The protein resides in the cytoplasm. It carries out the reaction Endonucleolytic cleavage at apurinic or apyrimidinic sites to products with a 5'-phosphate.. Its function is as follows. DNA repair enzyme involved in the repair of deaminated bases. Selectively cleaves double-stranded DNA at the second phosphodiester bond 3' to a deoxyinosine leaving behind the intact lesion on the nicked DNA. This chain is Endonuclease V, found in Saccharolobus islandicus (strain Y.N.15.51 / Yellowstone #2) (Sulfolobus islandicus).